The following is a 206-amino-acid chain: Pyridoxine/pyridoxamine 5'-phosphate oxidase (206 aa).

FMN contacts are provided by residues 54–59, 69–70, arginine 75, lysine 76, and glutamine 98; these read RVVLLK and YT. Lysine 59 contacts substrate. Tyrosine 116, arginine 120, and serine 124 together coordinate substrate. FMN is bound by residues 133-134 and tryptophan 178; that span reads QS. 184-186 contributes to the substrate binding site; that stretch reads RLH. Arginine 188 provides a ligand contact to FMN.

Belongs to the pyridoxamine 5'-phosphate oxidase family. As to quaternary structure, homodimer. FMN serves as cofactor.

It carries out the reaction pyridoxamine 5'-phosphate + O2 + H2O = pyridoxal 5'-phosphate + H2O2 + NH4(+). The enzyme catalyses pyridoxine 5'-phosphate + O2 = pyridoxal 5'-phosphate + H2O2. Its pathway is cofactor metabolism; pyridoxal 5'-phosphate salvage; pyridoxal 5'-phosphate from pyridoxamine 5'-phosphate: step 1/1. It functions in the pathway cofactor metabolism; pyridoxal 5'-phosphate salvage; pyridoxal 5'-phosphate from pyridoxine 5'-phosphate: step 1/1. Functionally, catalyzes the oxidation of either pyridoxine 5'-phosphate (PNP) or pyridoxamine 5'-phosphate (PMP) into pyridoxal 5'-phosphate (PLP). The polypeptide is Pyridoxine/pyridoxamine 5'-phosphate oxidase (Anaplasma phagocytophilum (strain HZ)).